A 129-amino-acid polypeptide reads, in one-letter code: Glycine cleavage system H protein (129 aa).

Positions 24-106 constitute a Lipoyl-binding domain; sequence LFKIGVSEFA…IGDGWLLIIK (83 aa). The residue at position 65 (lysine 65) is an N6-lipoyllysine.

The protein belongs to the GcvH family. In terms of assembly, the glycine cleavage system is composed of four proteins: P, T, L and H. (R)-lipoate is required as a cofactor.

In terms of biological role, the glycine cleavage system catalyzes the degradation of glycine. The H protein shuttles the methylamine group of glycine from the P protein to the T protein. The polypeptide is Glycine cleavage system H protein (Prochlorococcus marinus subsp. pastoris (strain CCMP1986 / NIES-2087 / MED4)).